Reading from the N-terminus, the 92-residue chain is Small ribosomal subunit protein uS19c (92 aa).

The protein belongs to the universal ribosomal protein uS19 family.

It is found in the plastid. It localises to the chloroplast. Functionally, protein S19 forms a complex with S13 that binds strongly to the 16S ribosomal RNA. This Daucus carota (Wild carrot) protein is Small ribosomal subunit protein uS19c.